A 173-amino-acid chain; its full sequence is Pathogenesis-related protein 1C (173 aa).

The N-terminal stretch at 1–20 (MSTSAVLFLLLAVFAAGASA) is a signal peptide.

Belongs to the thaumatin family.

The chain is Pathogenesis-related protein 1C from Hordeum vulgare (Barley).